A 407-amino-acid chain; its full sequence is Putative replication protein A (407 aa).

It belongs to the ParA family.

This is Putative replication protein A from Sinorhizobium fredii (strain NBRC 101917 / NGR234).